Reading from the N-terminus, the 319-residue chain is Ribosomal large subunit pseudouridine synthase C (319 aa).

The S4 RNA-binding domain occupies 20–83; sequence QRIDNFLRTQ…AEREEEAVSP (64 aa). Residue aspartate 144 is part of the active site.

The protein belongs to the pseudouridine synthase RluA family.

It catalyses the reaction uridine(955/2504/2580) in 23S rRNA = pseudouridine(955/2504/2580) in 23S rRNA. In terms of biological role, responsible for synthesis of pseudouridine from uracil at positions 955, 2504 and 2580 in 23S ribosomal RNA. This Escherichia coli O157:H7 protein is Ribosomal large subunit pseudouridine synthase C (rluC).